The primary structure comprises 155 residues: Small ribosomal subunit protein uS7cz/uS7cy (155 aa).

It belongs to the universal ribosomal protein uS7 family. As to quaternary structure, part of the 30S ribosomal subunit.

It is found in the plastid. The protein localises to the chloroplast. Functionally, one of the primary rRNA binding proteins, it binds directly to 16S rRNA where it nucleates assembly of the head domain of the 30S subunit. This chain is Small ribosomal subunit protein uS7cz/uS7cy (rps7-A), found in Drimys granadensis.